A 1281-amino-acid polypeptide reads, in one-letter code: Zinc finger transcription factor Trps1 (1281 aa).

The segment at 1-198 is disordered; that stretch reads MVRKKNPPLR…VPSDGGVRLN (198 aa). K29 participates in a covalent cross-link: Glycyl lysine isopeptide (Lys-Gly) (interchain with G-Cter in SUMO2). A compositionally biased stretch (polar residues) spans 40–49; the sequence is DQMSENTDQS. A compositionally biased stretch (basic and acidic residues) spans 53–63; it reads ELNHKEEHSLH. A Glycyl lysine isopeptide (Lys-Gly) (interchain with G-Cter in SUMO2) cross-link involves residue K76. 2 positions are modified to phosphoserine: S90 and S127. The span at 148 to 162 shows a compositional bias: basic and acidic residues; it reads LETKEDQKMSPKATE. The span at 163 to 189 shows a compositional bias: polar residues; sequence ETGQAQSGQANCQGLSPVSVASKNPQV. Residues S178 and S216 each carry the phosphoserine modification. The C2H2-type 1; atypical zinc finger occupies 222–247; the sequence is FKCNICGYGYYGNDPTDLIKHFRKYH. A Glycyl lysine isopeptide (Lys-Gly) (interchain with G-Cter in SUMO2) cross-link involves residue K263. The C2H2-type 2; atypical zinc finger occupies 333–358; the sequence is FRCKFCNFTYMGNSSTELEQHFLQTH. Residues 365–394 are disordered; that stretch reads SLPSSEVAKPSEKNSNKSIPALQSSDSGDL. Positions 380 to 391 are enriched in polar residues; that stretch reads NKSIPALQSSDS. Glycyl lysine isopeptide (Lys-Gly) (interchain with G-Cter in SUMO2) cross-links involve residues K418, K457, K474, and K488. The tract at residues 483–512 is disordered; it reads QNDLAKSSEGETMTKTDKSSSGAKKKDFSS. A compositionally biased stretch (basic and acidic residues) spans 488–512; it reads KSSEGETMTKTDKSSSGAKKKDFSS. Residues 614–637 form a C2H2-type 3; atypical zinc finger; it reads HQCHQCSFTTPDVDVLLFHYESVH. The mediates interaction with GLI3 stretch occupies residues 635–819; the sequence is SVHESQASDV…SLGLLTPVSG (185 aa). K645 is covalently cross-linked (Glycyl lysine isopeptide (Lys-Gly) (interchain with G-Cter in SUMO2)). C2H2-type zinc fingers lie at residues 666–689 and 692–715; these read HSCT…RRAH and YKCR…NTVH. K737 participates in a covalent cross-link: Glycyl lysine isopeptide (Lys-Gly) (interchain with G-Cter in SUMO2). T751 is modified (phosphothreonine). A Glycyl lysine isopeptide (Lys-Gly) (interchain with G-Cter in SUMO2) cross-link involves residue K755. Residue K766 forms a Glycyl lysine isopeptide (Lys-Gly) (interchain with G-Cter in SUMO1); alternate linkage. K766 is covalently cross-linked (Glycyl lysine isopeptide (Lys-Gly) (interchain with G-Cter in SUMO2); alternate). Glycyl lysine isopeptide (Lys-Gly) (interchain with G-Cter in SUMO2) cross-links involve residues K825, K850, K877, and K879. Residues 856-887 form a disordered region; it reads APAGGEKSGALPQQYPASGENKSKDESQSLLR. The GATA-type zinc finger occupies 896-920; sequence CANCLTTKTSLWRKNANGGYVCNAC. Residues K925, K937, and K965 each participate in a glycyl lysine isopeptide (Lys-Gly) (interchain with G-Cter in SUMO2) cross-link. The segment covering 961-977 has biased composition (polar residues); that stretch reads EQLNKQQRGSNEEQVNG. The disordered stretch occupies residues 961-1000; that stretch reads EQLNKQQRGSNEEQVNGSPLERRSEDHLTESHQREIPLPS. The residue at position 978 (S978) is a Phosphoserine. Residues 980–995 are compositionally biased toward basic and acidic residues; the sequence is LERRSEDHLTESHQRE. Residues 985 to 1184 are mediates interaction with RNF4; it reads EDHLTESHQR…PTANGASKEK (200 aa). Residues K1003, K1012, K1030, and K1040 each participate in a glycyl lysine isopeptide (Lys-Gly) (interchain with G-Cter in SUMO2) cross-link. The segment at 1039–1080 is disordered; it reads IKSPQESTGDPGNSSSVSEGKGSSERGSPIEKYMRPAKHPNY. Polar residues predominate over residues 1040 to 1049; sequence KSPQESTGDP. A Phosphoserine modification is found at S1041. The segment covering 1050-1059 has biased composition (low complexity); it reads GNSSSVSEGK. The segment covering 1060–1072 has biased composition (basic and acidic residues); it reads GSSERGSPIEKYM. S1066 carries the phosphoserine modification. Residue K1070 forms a Glycyl lysine isopeptide (Lys-Gly) (interchain with G-Cter in SUMO2) linkage. The residue at position 1085 (S1085) is a Phosphoserine. The transcriptional repressor domain stretch occupies residues 1163 to 1281; it reads PLDLAIKHSR…QVEKNGKPKE (119 aa). Residues 1168 to 1196 are disordered; it reads IKHSRPGPTANGASKEKTKAPPNVKNEGP. Residues K1192 and K1201 each participate in a glycyl lysine isopeptide (Lys-Gly) (interchain with G-Cter in SUMO2); alternate cross-link. Glycyl lysine isopeptide (Lys-Gly) (interchain with G-Cter in SUMO); alternate cross-links involve residues K1192 and K1201. Residue K1201 forms a Glycyl lysine isopeptide (Lys-Gly) (interchain with G-Cter in SUMO1); alternate linkage. 2 C2H2-type zinc fingers span residues 1215 to 1237 and 1243 to 1267; these read TKCV…MSCH and FQCS…RGLH.

As to quaternary structure, interacts with RNF4; regulates TRPS1 repressor activity. Interacts specifically with the activator form of GLI3 (GLI3A) but not with the repressor form (GLI3R). Sumoylated. Sumoylation in the repressor domain inhibits the transcription repression activity. Sumoylation on Lys-1201 is the major site. Appears to be sumoylated on multiple sites. As to expression, ubiquitously expressed in the adult. Found in fetal brain, lung, kidney, liver, spleen and thymus. More highly expressed in androgen-dependent than in androgen-independent prostate cancer cells.

Its subcellular location is the nucleus. Its function is as follows. Transcriptional repressor. Binds specifically to GATA sequences and represses expression of GATA-regulated genes at selected sites and stages in vertebrate development. Regulates chondrocyte proliferation and differentiation. Executes multiple functions in proliferating chondrocytes, expanding the region of distal chondrocytes, activating proliferation in columnar cells and supporting the differentiation of columnar into hypertrophic chondrocytes. The polypeptide is Zinc finger transcription factor Trps1 (TRPS1) (Homo sapiens (Human)).